Reading from the N-terminus, the 101-residue chain is Small ribosomal subunit protein uS14 (101 aa).

Belongs to the universal ribosomal protein uS14 family. Part of the 30S ribosomal subunit. Contacts proteins S3 and S10.

In terms of biological role, binds 16S rRNA, required for the assembly of 30S particles and may also be responsible for determining the conformation of the 16S rRNA at the A site. The chain is Small ribosomal subunit protein uS14 from Idiomarina loihiensis (strain ATCC BAA-735 / DSM 15497 / L2-TR).